The following is a 103-amino-acid chain: Integration host factor subunit alpha (103 aa).

The interval 50-72 (GNFNLRDKGERPGRNPKTGEEIP) is disordered. Over residues 54 to 69 (LRDKGERPGRNPKTGE) the composition is skewed to basic and acidic residues.

This sequence belongs to the bacterial histone-like protein family. Heterodimer of an alpha and a beta chain.

Functionally, this protein is one of the two subunits of integration host factor, a specific DNA-binding protein that functions in genetic recombination as well as in transcriptional and translational control. The protein is Integration host factor subunit alpha of Coxiella burnetii (strain CbuK_Q154) (Coxiella burnetii (strain Q154)).